Consider the following 235-residue polypeptide: Ubiquinone/menaquinone biosynthesis C-methyltransferase UbiE (235 aa).

The S-adenosyl-L-methionine site is built by T59, D84, and S123.

The protein belongs to the class I-like SAM-binding methyltransferase superfamily. MenG/UbiE family.

It catalyses the reaction a 2-demethylmenaquinol + S-adenosyl-L-methionine = a menaquinol + S-adenosyl-L-homocysteine + H(+). The catalysed reaction is a 2-methoxy-6-(all-trans-polyprenyl)benzene-1,4-diol + S-adenosyl-L-methionine = a 5-methoxy-2-methyl-3-(all-trans-polyprenyl)benzene-1,4-diol + S-adenosyl-L-homocysteine + H(+). Its pathway is quinol/quinone metabolism; menaquinone biosynthesis; menaquinol from 1,4-dihydroxy-2-naphthoate: step 2/2. It participates in cofactor biosynthesis; ubiquinone biosynthesis. Methyltransferase required for the conversion of demethylmenaquinol (DMKH2) to menaquinol (MKH2) and the conversion of 2-polyprenyl-6-methoxy-1,4-benzoquinol (DDMQH2) to 2-polyprenyl-3-methyl-6-methoxy-1,4-benzoquinol (DMQH2). This is Ubiquinone/menaquinone biosynthesis C-methyltransferase UbiE from Campylobacter jejuni subsp. jejuni serotype O:6 (strain 81116 / NCTC 11828).